The sequence spans 470 residues: 3-isopropylmalate dehydratase large subunit (470 aa).

Residues 50–121 form a disordered region; it reads NVARGCQHRH…PCGRPGAGRH (72 aa). [4Fe-4S] cluster is bound by residues C349, C409, and C412.

The protein belongs to the aconitase/IPM isomerase family. LeuC type 1 subfamily. As to quaternary structure, heterodimer of LeuC and LeuD. [4Fe-4S] cluster is required as a cofactor.

The enzyme catalyses (2R,3S)-3-isopropylmalate = (2S)-2-isopropylmalate. It participates in amino-acid biosynthesis; L-leucine biosynthesis; L-leucine from 3-methyl-2-oxobutanoate: step 2/4. Catalyzes the isomerization between 2-isopropylmalate and 3-isopropylmalate, via the formation of 2-isopropylmaleate. This Azotobacter vinelandii protein is 3-isopropylmalate dehydratase large subunit.